Consider the following 205-residue polypeptide: Methylthioribulose-1-phosphate dehydratase (205 aa).

2 residues coordinate Zn(2+): His95 and His97.

Belongs to the aldolase class II family. MtnB subfamily. It depends on Zn(2+) as a cofactor.

It catalyses the reaction 5-(methylsulfanyl)-D-ribulose 1-phosphate = 5-methylsulfanyl-2,3-dioxopentyl phosphate + H2O. The protein operates within amino-acid biosynthesis; L-methionine biosynthesis via salvage pathway; L-methionine from S-methyl-5-thio-alpha-D-ribose 1-phosphate: step 2/6. Catalyzes the dehydration of methylthioribulose-1-phosphate (MTRu-1-P) into 2,3-diketo-5-methylthiopentyl-1-phosphate (DK-MTP-1-P). In Microcystis aeruginosa (strain NIES-843 / IAM M-2473), this protein is Methylthioribulose-1-phosphate dehydratase.